Reading from the N-terminus, the 125-residue chain is Large ribosomal subunit protein bL12 (125 aa).

The protein belongs to the bacterial ribosomal protein bL12 family. Homodimer. Part of the ribosomal stalk of the 50S ribosomal subunit. Forms a multimeric L10(L12)X complex, where L10 forms an elongated spine to which 2 to 4 L12 dimers bind in a sequential fashion. Binds GTP-bound translation factors.

In terms of biological role, forms part of the ribosomal stalk which helps the ribosome interact with GTP-bound translation factors. Is thus essential for accurate translation. This chain is Large ribosomal subunit protein bL12, found in Thermus thermophilus (strain ATCC BAA-163 / DSM 7039 / HB27).